The following is a 498-amino-acid chain: MTSSANLRPDIVLIGAGIMGATFGTLLKELNPSYSMMMFERLSDCGQESSQSWNNAGTGHAANCELNYTPQRPDGTVEITQALRVNTEFDLSRQLWSYLVTKGAIPDPQSFIHPCPHMSMVWGAENVAFLKARFQAMSAHHCYHGMEYTEDGAQIEKWAPLTMEGRDPAEPVAATRIITGTDVDYGSLTHLLVAHLKAQPDFDLHYNTEVEGLDREPDGRWRVTFKDVNSGERHSVSAGFVFIGAGGASIDLLQKSNIPEGKGYGGFPVSGIWLRCDVDAVTQRHHAKVYGKASSGSPPMSVPHLDTRVIDGKTSLLFGPYAGFSTKFLKHGSLTDLFGSITLHNIGPLLDVGRHNIELTEYLIAQVLQTHHHQFEMLKAFFPNAKRADWKEAVAGQRVQVIKPYPDGGGFLEFGTEIVPAADHSLVALLGASPGASTAAAIALEVLEACFADRLTDDAWLPALKRIIPTYGIDLREDAEACRASRAATASVLNIDNI.

Belongs to the MQO family. Requires FAD as cofactor.

The catalysed reaction is (S)-malate + a quinone = a quinol + oxaloacetate. It functions in the pathway carbohydrate metabolism; tricarboxylic acid cycle; oxaloacetate from (S)-malate (quinone route): step 1/1. The protein is Probable malate:quinone oxidoreductase of Granulibacter bethesdensis (strain ATCC BAA-1260 / CGDNIH1).